The primary structure comprises 763 residues: Phosphoglycerol transferase I (763 aa).

A run of 4 helical transmembrane segments spans residues 1-21 (MSELLSFALFLASVLIYAWKA), 26-46 (WWFAATLTVLGLFVVLNITLF), 77-97 (ILPGIGIVLGLTAVFGALGWI), and 108-128 (FGYSLLALLLALGSVDASPAF).

It belongs to the OpgB family.

The protein localises to the cell inner membrane. The catalysed reaction is a phosphatidylglycerol + a membrane-derived-oligosaccharide D-glucose = a 1,2-diacyl-sn-glycerol + a membrane-derived-oligosaccharide 6-(glycerophospho)-D-glucose.. It functions in the pathway glycan metabolism; osmoregulated periplasmic glucan (OPG) biosynthesis. In terms of biological role, transfers a phosphoglycerol residue from phosphatidylglycerol to the membrane-bound nascent glucan backbones. The polypeptide is Phosphoglycerol transferase I (Escherichia coli (strain 55989 / EAEC)).